The chain runs to 151 residues: Probable chemoreceptor glutamine deamidase CheD (151 aa).

The protein belongs to the CheD family.

It carries out the reaction L-glutaminyl-[protein] + H2O = L-glutamyl-[protein] + NH4(+). Functionally, probably deamidates glutamine residues to glutamate on methyl-accepting chemotaxis receptors (MCPs), playing an important role in chemotaxis. The sequence is that of Probable chemoreceptor glutamine deamidase CheD from Methanosarcina barkeri (strain Fusaro / DSM 804).